Consider the following 327-residue polypeptide: Annexin A8 (327 aa).

Annexin repeat units lie at residues 21–92, 93–164, 177–249, and 253–324; these read FNPD…ALMY, PPYR…CLLQ, GLAL…TVVK, and NLHS…SLVG. Ca(2+) is bound by residues Met-266, Gly-268, Gly-270, and Asp-310.

Belongs to the annexin family.

Its function is as follows. This protein is an anticoagulant protein that acts as an indirect inhibitor of the thromboplastin-specific complex, which is involved in the blood coagulation cascade. The chain is Annexin A8 (ANXA8) from Pan troglodytes (Chimpanzee).